Consider the following 239-residue polypeptide: Alpha-acetolactate decarboxylase (239 aa).

This sequence belongs to the alpha-acetolactate decarboxylase family.

The enzyme catalyses (2S)-2-acetolactate + H(+) = (R)-acetoin + CO2. It participates in polyol metabolism; (R,R)-butane-2,3-diol biosynthesis; (R,R)-butane-2,3-diol from pyruvate: step 2/3. Its activity is regulated as follows. The enzyme is active only in the presence of branched-chain amino acids. Valine results in much higher activation than leucine or isoleucine. Functionally, converts acetolactate into acetoin. Regulates leucine and valine biosynthesis by diverting the flux of alpha-acetolactate towards acetoin when the branched-chain amino acids are present in high concentration. This chain is Alpha-acetolactate decarboxylase (aldC), found in Streptococcus thermophilus.